We begin with the raw amino-acid sequence, 526 residues long: Acid-sensing ion channel 1 (526 aa).

Residues 1-49 are Cytoplasmic-facing; sequence MELKTEEEEVGGVQPVSIQAFASSSTLHGLAHIFSYERLSLKRALWALC. Residues 50-66 traverse the membrane as a helical segment; that stretch reads FLGSLAVLLCVCTERVQ. Topologically, residues 67 to 425 are extracellular; it reads YYFCYHHVTK…ETIEQKKAYE (359 aa). 7 disulfides stabilise this stretch: Cys93/Cys194, Cys172/Cys179, Cys290/Cys365, Cys308/Cys361, Cys312/Cys359, Cys321/Cys343, and Cys323/Cys335. Residues Asn366 and Asn393 are each glycosylated (N-linked (GlcNAc...) asparagine). The chain crosses the membrane as a discontinuously helical span at residues 426–456; it reads IAGLLGDIGGQMGLFIGASILTVLELFDYAY. The GAS motif; ion selectivity filter motif lies at 442–444; sequence GAS. At 457–526 the chain is on the cytoplasmic side; that stretch reads EVIKHRLCRR…ARGTFEDFTC (70 aa). Phosphoserine occurs at positions 477 and 497.

It belongs to the amiloride-sensitive sodium channel (TC 1.A.6) family. ASIC1 subfamily. Homotrimer. Heterotrimer; with other ASIC proteins producing channel with different properties. Interacts with PICK1; regulates ASIC1 clustering in membranes. Interacts with STOM; alters heterotrimeric ASIC channels activity. Post-translationally, pH-gating could be regulated by serine proteases. Phosphorylation by PKA regulates interaction with PICK1 and subcellular localization. Phosphorylation by PKC may regulate the channel. Expressed in dorsal root ganglia and sciatic nerve (at protein level). Widely distributed throughout the brain. Expressed in olfactory bulb, neo and allocortical regions, dentate granule cells, pyramidal cells of CA1-CA3 subfields of the hippocampal formation, habenula, basolateral amygdaloid nuclei, and in the Purkinje and granule cells of the cerebellum. Diffusely detected over most other regions of the basal ganglia, including thalamic nuclei, substantia nigra, striatum and globus pallidus, hypothalamus, midbrain, pons, medulla and choroid plexus. In terms of tissue distribution, expressed only in dorsal root ganglion (DRG). As to expression, expressed exclusively in trigeminal ganglion and dorsal root ganglion.

It localises to the cell membrane. Its subcellular location is the postsynaptic cell membrane. The protein resides in the cell projection. It is found in the dendrite. The catalysed reaction is Na(+)(in) = Na(+)(out). It carries out the reaction Li(+)(in) = Li(+)(out). It catalyses the reaction K(+)(in) = K(+)(out). The enzyme catalyses Ca(2+)(in) = Ca(2+)(out). The catalysed reaction is H(+)(in) = H(+)(out). Its activity is regulated as follows. Inhibited by the diuretic drug amiloride. External calcium is required to potentiate proton activation of ASIC1 at physiological concentrations, but at higher, non-physiological concentrations, it inhibits activation. Also potentiated by other multivalent cations like Mg(2+), Ba(2+). Activated by FMRFamide-related neuropeptides. Inhibited by anti-inflammatory drugs like salicylic acid. The spider venom psalmotoxin-1 specifically inhibits the ASIC1 homotrimer. The snake venom mambalgin-1, mambalgin-2 and mambalgin-3 inhibit the homotrimer of Asic1a (ASIC1 isoform 1). The snake venom mambalgin-1 and mambalgin-2 inhibit heterotrimers of Asic1a-Asic1b (ASIC1 isoform 1-ASIC1 isoform 3). Heterotrimer of Asic1a-Asic2a is inhibited by the snake venom mambalgin-1, mambalgin-2 and mambalgin-3. Heterotrimer of Asic1a-Asic2b is inhibited by the snake venom mambalgin-1 and mambalgin-2. The spider venom Pi-theraphotoxin-Hm3a inhibits the homotrimer of Asic1a (ASIC1 isoform 1). The spider venom Pi-theraphotoxin-Hm3a inhibits heterotrimers of Asic1a-Asic1b (ASIC1 isoform 1-ASIC1 isoform 3). The spider venom Pi-hexatoxin-Hi1a inhibits the ASIC1 homotrimer. With respect to regulation, not inhibited by extracellular calcium. Its function is as follows. Forms voltage-independent, pH-gated trimeric sodium channels that act as postsynaptic excitatory receptors in the nervous system, playing a crucial role in regulating synaptic plasticity, learning, and memory. Upon extracellular pH drop this channel elicits transient, fast activating, and completely desensitizing inward currents. Displays high selectivity for sodium ions but can also permit the permeation of other cations. Regulates more or less directly intracellular calcium concentration and CaMKII phosphorylation, and thereby the density of dendritic spines. Modulates neuronal activity in the circuits underlying innate fear. Permeable to other cations including calcium, lithium and potassium. Functionally, pH activation and steady-state inactivation are shifted to more acidic values. Forms channels that are not permeable to calcium as it discrimates stronger between monovalent cations. In terms of biological role, has no pH-gated sodium channel activity per se but can associate with other ASICs and regulate their pH-sensitivity. In Rattus norvegicus (Rat), this protein is Acid-sensing ion channel 1.